A 38-amino-acid chain; its full sequence is Non-specific lipid-transfer protein P2 (38 aa).

Belongs to the plant LTP family.

It is found in the secreted. In terms of biological role, plant non-specific lipid-transfer proteins transfer phospholipids as well as galactolipids across membranes. May play a role in wax or cutin deposition in the cell walls of expanding epidermal cells and certain secretory tissues. This is Non-specific lipid-transfer protein P2 from Vitis sp. (Grape).